The chain runs to 155 residues: SsrA-binding protein (155 aa).

This sequence belongs to the SmpB family.

It localises to the cytoplasm. In terms of biological role, required for rescue of stalled ribosomes mediated by trans-translation. Binds to transfer-messenger RNA (tmRNA), required for stable association of tmRNA with ribosomes. tmRNA and SmpB together mimic tRNA shape, replacing the anticodon stem-loop with SmpB. tmRNA is encoded by the ssrA gene; the 2 termini fold to resemble tRNA(Ala) and it encodes a 'tag peptide', a short internal open reading frame. During trans-translation Ala-aminoacylated tmRNA acts like a tRNA, entering the A-site of stalled ribosomes, displacing the stalled mRNA. The ribosome then switches to translate the ORF on the tmRNA; the nascent peptide is terminated with the 'tag peptide' encoded by the tmRNA and targeted for degradation. The ribosome is freed to recommence translation, which seems to be the essential function of trans-translation. The protein is SsrA-binding protein of Streptococcus uberis (strain ATCC BAA-854 / 0140J).